The chain runs to 509 residues: ATP synthase subunit alpha (509 aa).

Residue 169 to 176 (GDRQTGKT) coordinates ATP.

This sequence belongs to the ATPase alpha/beta chains family. As to quaternary structure, F-type ATPases have 2 components, CF(1) - the catalytic core - and CF(0) - the membrane proton channel. CF(1) has five subunits: alpha(3), beta(3), gamma(1), delta(1), epsilon(1). CF(0) has three main subunits: a(1), b(2) and c(9-12). The alpha and beta chains form an alternating ring which encloses part of the gamma chain. CF(1) is attached to CF(0) by a central stalk formed by the gamma and epsilon chains, while a peripheral stalk is formed by the delta and b chains.

The protein localises to the cell inner membrane. It carries out the reaction ATP + H2O + 4 H(+)(in) = ADP + phosphate + 5 H(+)(out). Produces ATP from ADP in the presence of a proton gradient across the membrane. The alpha chain is a regulatory subunit. The protein is ATP synthase subunit alpha of Brucella abortus (strain S19).